A 270-amino-acid chain; its full sequence is Acyl-[acyl-carrier-protein]--UDP-N-acetylglucosamine O-acyltransferase (270 aa).

It belongs to the transferase hexapeptide repeat family. LpxA subfamily. As to quaternary structure, homotrimer.

It is found in the cytoplasm. The enzyme catalyses a (3R)-hydroxyacyl-[ACP] + UDP-N-acetyl-alpha-D-glucosamine = a UDP-3-O-[(3R)-3-hydroxyacyl]-N-acetyl-alpha-D-glucosamine + holo-[ACP]. It participates in glycolipid biosynthesis; lipid IV(A) biosynthesis; lipid IV(A) from (3R)-3-hydroxytetradecanoyl-[acyl-carrier-protein] and UDP-N-acetyl-alpha-D-glucosamine: step 1/6. In terms of biological role, involved in the biosynthesis of lipid A, a phosphorylated glycolipid that anchors the lipopolysaccharide to the outer membrane of the cell. This Helicobacter pylori (strain G27) protein is Acyl-[acyl-carrier-protein]--UDP-N-acetylglucosamine O-acyltransferase.